We begin with the raw amino-acid sequence, 246 residues long: Ubiquinone biosynthesis O-methyltransferase (246 aa).

S-adenosyl-L-methionine-binding residues include Arg44, Gly63, Asp84, and Met128.

Belongs to the methyltransferase superfamily. UbiG/COQ3 family.

It carries out the reaction a 3-demethylubiquinol + S-adenosyl-L-methionine = a ubiquinol + S-adenosyl-L-homocysteine + H(+). The enzyme catalyses a 3-(all-trans-polyprenyl)benzene-1,2-diol + S-adenosyl-L-methionine = a 2-methoxy-6-(all-trans-polyprenyl)phenol + S-adenosyl-L-homocysteine + H(+). It functions in the pathway cofactor biosynthesis; ubiquinone biosynthesis. Functionally, O-methyltransferase that catalyzes the 2 O-methylation steps in the ubiquinone biosynthetic pathway. The chain is Ubiquinone biosynthesis O-methyltransferase from Xylella fastidiosa (strain Temecula1 / ATCC 700964).